Reading from the N-terminus, the 90-residue chain is Small ribosomal subunit protein uS15c (90 aa).

This sequence belongs to the universal ribosomal protein uS15 family. In terms of assembly, part of the 30S ribosomal subunit.

It is found in the plastid. The protein resides in the chloroplast. This Manihot esculenta (Cassava) protein is Small ribosomal subunit protein uS15c (rps15).